Here is a 497-residue protein sequence, read N- to C-terminus: Cytoplasmic dynein 1 light intermediate chain 2 (497 aa).

61 to 68 (GEDGSGKT) is an ATP binding site. Disordered regions lie at residues 187 to 206 (PEEG…SGSD), 366 to 408 (QQES…IKNN), 423 to 461 (LSKK…TEQC), and 474 to 497 (QEEL…ENEA). Residues serine 194, serine 369, and serine 377 each carry the phosphoserine modification. Arginine 383 carries the omega-N-methylarginine modification. Positions 423–444 (LSKKTGSPGSPSAGGVQSTAKK) are enriched in polar residues. A Phosphothreonine modification is found at threonine 427. Phosphoserine is present on residues serine 429 and serine 432. Over residues 476–485 (ELDRMTRKPD) the composition is skewed to basic and acidic residues. Over residues 487-497 (MVTNSSTENEA) the composition is skewed to polar residues.

Belongs to the dynein light intermediate chain family. Homodimer. The cytoplasmic dynein 1 complex consists of two catalytic heavy chains (HCs) and a number of non-catalytic subunits presented by intermediate chains (ICs), light intermediate chains (LICs) and light chains (LCs); the composition seems to vary in respect to the IC, LIC and LC composition. The heavy chain homodimer serves as a scaffold for the probable homodimeric assembly of the respective non-catalytic subunits. The ICs and LICs bind directly to the HC dimer and the LCs assemble on the IC dimer. Self-associates. Interacts with DYNC1H1; DYNC1LI1 and DYNC1LI2 bind mutually exclusive to DYNC1H1. In terms of tissue distribution, ubiquitous.

It is found in the cytoplasm. It localises to the cytoskeleton. Functionally, acts as one of several non-catalytic accessory components of the cytoplasmic dynein 1 complex that are thought to be involved in linking dynein to cargos and to adapter proteins that regulate dynein function. Cytoplasmic dynein 1 acts as a motor for the intracellular retrograde motility of vesicles and organelles along microtubules. May play a role in binding dynein to membranous organelles or chromosomes. This is Cytoplasmic dynein 1 light intermediate chain 2 (Dync1li2) from Rattus norvegicus (Rat).